A 247-amino-acid chain; its full sequence is Exosome complex component Rrp4 (247 aa).

One can recognise an S1 motif domain in the interval 70-143; sequence GDTVIGLIED…INPILSIKGK (74 aa). A KH domain is found at 149–211; that stretch reads SSGIVIDIPP…EALVEAIQII (63 aa).

Belongs to the RRP4 family. In terms of assembly, component of the archaeal exosome complex. Forms a trimer of Rrp4 and/or Csl4 subunits. The trimer associates with a hexameric ring-like arrangement composed of 3 Rrp41-Rrp42 heterodimers.

It is found in the cytoplasm. In terms of biological role, non-catalytic component of the exosome, which is a complex involved in RNA degradation. Increases the RNA binding and the efficiency of RNA degradation. Confers strong poly(A) specificity to the exosome. This is Exosome complex component Rrp4 from Sulfurisphaera tokodaii (strain DSM 16993 / JCM 10545 / NBRC 100140 / 7) (Sulfolobus tokodaii).